The following is a 719-amino-acid chain: Phosphoribosylformylglycinamidine synthase subunit PurL (719 aa).

H47 is an active-site residue. ATP-binding residues include Y50 and K89. Position 91 (E91) interacts with Mg(2+). Substrate contacts are provided by residues S92–H95 and R114. The active-site Proton acceptor is the H93. Mg(2+) is bound at residue D115. Q238 is a substrate binding site. D266 is a binding site for Mg(2+). E310–Q312 is a binding site for substrate. ATP-binding residues include D488 and G525. N526 contributes to the Mg(2+) binding site. S528 is a substrate binding site.

It belongs to the FGAMS family. As to quaternary structure, monomer. Part of the FGAM synthase complex composed of 1 PurL, 1 PurQ and 2 PurS subunits.

It is found in the cytoplasm. The enzyme catalyses N(2)-formyl-N(1)-(5-phospho-beta-D-ribosyl)glycinamide + L-glutamine + ATP + H2O = 2-formamido-N(1)-(5-O-phospho-beta-D-ribosyl)acetamidine + L-glutamate + ADP + phosphate + H(+). The protein operates within purine metabolism; IMP biosynthesis via de novo pathway; 5-amino-1-(5-phospho-D-ribosyl)imidazole from N(2)-formyl-N(1)-(5-phospho-D-ribosyl)glycinamide: step 1/2. Part of the phosphoribosylformylglycinamidine synthase complex involved in the purines biosynthetic pathway. Catalyzes the ATP-dependent conversion of formylglycinamide ribonucleotide (FGAR) and glutamine to yield formylglycinamidine ribonucleotide (FGAM) and glutamate. The FGAM synthase complex is composed of three subunits. PurQ produces an ammonia molecule by converting glutamine to glutamate. PurL transfers the ammonia molecule to FGAR to form FGAM in an ATP-dependent manner. PurS interacts with PurQ and PurL and is thought to assist in the transfer of the ammonia molecule from PurQ to PurL. The chain is Phosphoribosylformylglycinamidine synthase subunit PurL from Jannaschia sp. (strain CCS1).